We begin with the raw amino-acid sequence, 112 residues long: MTDQEFLDLAERLLLAVEQDCDRINDETDADLDAQRVGGMVTLVFANRSQIVINQQKPLHEIWLAAKAGGFHYRYDAAQGAWLDTKGAGEFFANLSRYATEQSGLALQFSAR.

Belongs to the frataxin family.

Involved in iron-sulfur (Fe-S) cluster assembly. May act as a regulator of Fe-S biogenesis. This chain is Iron-sulfur cluster assembly protein CyaY, found in Delftia acidovorans (strain DSM 14801 / SPH-1).